The primary structure comprises 292 residues: Glycine-rich RNA-binding protein RZ1B (292 aa).

One can recognise an RRM domain in the interval Ser-12–Pro-90. A Phosphoserine modification is found at Ser-20. Residues Gly-93–Glu-114 are disordered. Residues Cys-117 to Ser-132 form a CCHC-type zinc finger. 2 stretches are compositionally biased toward basic and acidic residues: residues Asp-180–Phe-210 and Phe-220–Pro-268. The segment at Asp-180 to Trp-292 is disordered.

Expressed in roots, rosette and cauline leaves, stems, floral buds and flowers.

It localises to the nucleus. In terms of biological role, binds RNA and DNA sequences non-specifically. May be involved in tolerance to cold stress. In Arabidopsis thaliana (Mouse-ear cress), this protein is Glycine-rich RNA-binding protein RZ1B.